Consider the following 768-residue polypeptide: Ral guanine nucleotide dissociation stimulator-like 1 (768 aa).

Residues 65–196 (KIRTIKAGTL…RAQNLLEQFQ (132 aa)) enclose the N-terminal Ras-GEF domain. The Ras-GEF domain occupies 232 to 501 (SEDLVAEQLT…YALSCEIEAA (270 aa)). Residue serine 520 is modified to Phosphoserine. Residues 530-623 (PGSTPTKEQP…PPTCNNNPKI (94 aa)) form a disordered region. 2 stretches are compositionally biased toward low complexity: residues 541–561 (SAASGSSGESMDSVSVSSCES) and 586–596 (ESSSSCSSIHS). Residues 597–621 (MDTNSSGMSSLINPLSSPPTCNNNP) are compositionally biased toward polar residues. Residues 648–735 (DTCIIRISVE…FDFILRKKNS (88 aa)) enclose the Ras-associating domain.

Interacts with Ras.

Its function is as follows. Probable guanine nucleotide exchange factor. In Mus musculus (Mouse), this protein is Ral guanine nucleotide dissociation stimulator-like 1 (Rgl1).